The chain runs to 303 residues: Dihydroorotate dehydrogenase B (NAD(+)), catalytic subunit (303 aa).

FMN contacts are provided by residues S21 and K45–G46. Substrate is bound by residues K45 and N69–L73. FMN-binding residues include N99 and N127. N127 serves as a coordination point for substrate. Catalysis depends on C130, which acts as the Nucleophile. The FMN site is built by K165 and I191. A substrate-binding site is contributed by N192–T193. Residues G217, G243–G244, and G265–T266 each bind FMN.

It belongs to the dihydroorotate dehydrogenase family. Type 1 subfamily. In terms of assembly, heterotetramer of 2 PyrK and 2 PyrD type B subunits. FMN is required as a cofactor.

It localises to the cytoplasm. It catalyses the reaction (S)-dihydroorotate + NAD(+) = orotate + NADH + H(+). Its pathway is pyrimidine metabolism; UMP biosynthesis via de novo pathway; orotate from (S)-dihydroorotate (NAD(+) route): step 1/1. Functionally, catalyzes the conversion of dihydroorotate to orotate with NAD(+) as electron acceptor. The protein is Dihydroorotate dehydrogenase B (NAD(+)), catalytic subunit (pyrD) of Thermodesulfovibrio yellowstonii (strain ATCC 51303 / DSM 11347 / YP87).